We begin with the raw amino-acid sequence, 360 residues long: D-alanine--D-alanine ligase (360 aa).

Positions 146 to 352 (KLCVADAGIA…YRNLITRLLE (207 aa)) constitute an ATP-grasp domain. 179-234 (EAQVSYPLFVKPASLGSSIGISKVHNREELHPALQAACALDWKVVVESTVKGREIE) is a binding site for ATP. Mg(2+) contacts are provided by Asp-305, Glu-319, and Asn-321.

This sequence belongs to the D-alanine--D-alanine ligase family. Requires Mg(2+) as cofactor. Mn(2+) serves as cofactor.

The protein localises to the cytoplasm. The catalysed reaction is 2 D-alanine + ATP = D-alanyl-D-alanine + ADP + phosphate + H(+). Its pathway is cell wall biogenesis; peptidoglycan biosynthesis. Cell wall formation. In Chlorobium chlorochromatii (strain CaD3), this protein is D-alanine--D-alanine ligase.